The chain runs to 82 residues: Large ribosomal subunit protein bL31B (82 aa).

The protein belongs to the bacterial ribosomal protein bL31 family. Type B subfamily. As to quaternary structure, part of the 50S ribosomal subunit.

This Bacillus velezensis (strain DSM 23117 / BGSC 10A6 / LMG 26770 / FZB42) (Bacillus amyloliquefaciens subsp. plantarum) protein is Large ribosomal subunit protein bL31B.